The primary structure comprises 285 residues: Hypersensitive-induced reaction 1 protein (285 aa).

A lipid anchor (N-myristoyl glycine) is attached at G2. Residues 118 to 190 are a coiled coil; it reads FEQKNEIAKS…EKILQIKRAE (73 aa).

As to quaternary structure, homo- and heterodimer. Interacts with LRR1 (via LRR domain). Constitutively expressed in stems, roots and flowers, but not in leaves and fruits.

In terms of biological role, positive regulator of hypersensitive response (HR)-like cell death. May be involved in potassium ion channel regulation. In Capsicum annuum (Capsicum pepper), this protein is Hypersensitive-induced reaction 1 protein.